The chain runs to 398 residues: Chalcone synthase 1 (398 aa).

Cys167 is a catalytic residue.

It belongs to the thiolase-like superfamily. Chalcone/stilbene synthases family.

The enzyme catalyses (E)-4-coumaroyl-CoA + 3 malonyl-CoA + 3 H(+) = 2',4,4',6'-tetrahydroxychalcone + 3 CO2 + 4 CoA. It participates in secondary metabolite biosynthesis; flavonoid biosynthesis. In terms of biological role, the primary product of this enzyme is 4,2',4',6'-tetrahydroxychalcone (also termed naringenin-chalcone or chalcone) which can under specific conditions spontaneously isomerize into naringenin. The polypeptide is Chalcone synthase 1 (CHS1) (Gerbera hybrida (Daisy)).